Here is a 199-residue protein sequence, read N- to C-terminus: N-(5'-phosphoribosyl)anthranilate isomerase (199 aa).

The protein belongs to the TrpF family.

The catalysed reaction is N-(5-phospho-beta-D-ribosyl)anthranilate = 1-(2-carboxyphenylamino)-1-deoxy-D-ribulose 5-phosphate. It participates in amino-acid biosynthesis; L-tryptophan biosynthesis; L-tryptophan from chorismate: step 3/5. The chain is N-(5'-phosphoribosyl)anthranilate isomerase from Streptococcus pneumoniae (strain ATCC 700669 / Spain 23F-1).